Here is a 385-residue protein sequence, read N- to C-terminus: Muconate cycloisomerase 1-2 (385 aa).

Lys171 is a catalytic residue. Residues Glu226 and Asp251 each contribute to the Mn(2+) site.

This sequence belongs to the mandelate racemase/muconate lactonizing enzyme family. Homooctamer. Requires Mn(2+) as cofactor.

It carries out the reaction (S)-muconolactone = cis,cis-muconate + H(+). It participates in aromatic compound metabolism; beta-ketoadipate pathway; 5-oxo-4,5-dihydro-2-furylacetate from catechol: step 2/3. Functionally, catalyzes a syn cycloisomerization. In Acinetobacter lwoffii, this protein is Muconate cycloisomerase 1-2 (catB2).